The primary structure comprises 273 residues: 4-hydroxy-tetrahydrodipicolinate reductase (273 aa).

NAD(+)-binding positions include 12–17 (GAGGRM) and glutamate 38. NADP(+) is bound at residue arginine 39. NAD(+)-binding positions include 102–104 (GTT) and 126–129 (AANF). Histidine 159 acts as the Proton donor/acceptor in catalysis. Histidine 160 is a (S)-2,3,4,5-tetrahydrodipicolinate binding site. The Proton donor role is filled by lysine 163. 169–170 (GT) contacts (S)-2,3,4,5-tetrahydrodipicolinate.

Belongs to the DapB family. In terms of assembly, homotetramer.

It is found in the cytoplasm. The catalysed reaction is (S)-2,3,4,5-tetrahydrodipicolinate + NAD(+) + H2O = (2S,4S)-4-hydroxy-2,3,4,5-tetrahydrodipicolinate + NADH + H(+). The enzyme catalyses (S)-2,3,4,5-tetrahydrodipicolinate + NADP(+) + H2O = (2S,4S)-4-hydroxy-2,3,4,5-tetrahydrodipicolinate + NADPH + H(+). It participates in amino-acid biosynthesis; L-lysine biosynthesis via DAP pathway; (S)-tetrahydrodipicolinate from L-aspartate: step 4/4. Its function is as follows. Catalyzes the conversion of 4-hydroxy-tetrahydrodipicolinate (HTPA) to tetrahydrodipicolinate. The protein is 4-hydroxy-tetrahydrodipicolinate reductase of Shigella sonnei (strain Ss046).